The following is a 444-amino-acid chain: Cell division cycle 20.4, cofactor of APC complex (444 aa).

The span at 88–99 (LLSTNHSDSPHQ) shows a compositional bias: polar residues. The tract at residues 88–108 (LLSTNHSDSPHQNPKPVKPRR) is disordered. WD repeat units follow at residues 124-161 (RDDFSLNLLDWGSANVLAIALGDTVYLWDASSGSTSEL), 166-205 (EDKGPVTSINWTQDGLDLAVGLDNSEVQLWDCVSNRQVRT), 209-246 (GHESRVGSLAWDNHILTTGGMDGKIVNNDVRIRSSIVE), 250-289 (GHTEEVCGLKWSESGNKQASGGNDNVVHIWDRSLASSKQT), 298-340 (EHTA…CLNS), 342-383 (ETGS…KMAE), and 386-425 (GHTSRVLFMAQSPNGCTVASAAGDENLRLWNVFGEPPKTT).

The protein belongs to the WD repeat CDC20/Fizzy family. As to quaternary structure, the APC/C is composed of at least 11 subunits that stay tightly associated throughout the cell cycle.

The protein resides in the cytoplasm. Its pathway is protein modification; protein ubiquitination. Its function is as follows. Component of the anaphase promoting complex/cyclosome (APC/C), a cell cycle-regulated E3 ubiquitin-protein ligase complex that controls progression through mitosis and the G1 phase of the cell cycle. This is Cell division cycle 20.4, cofactor of APC complex (CDC20-4) from Arabidopsis thaliana (Mouse-ear cress).